The primary structure comprises 396 residues: Flavohemoprotein (396 aa).

Residues 1–136 (MLDNHTIAIV…LANVFIQRED (136 aa)) form the Globin domain. Histidine 85 contributes to the heme b binding site. Active-site charge relay system residues include tyrosine 95 and glutamate 135. Positions 147-396 (GGWSGVRPFR…YECFGPHKVV (250 aa)) are reductase. In terms of domain architecture, FAD-binding FR-type spans 150–255 (SGVRPFRIVN…AAPHGDFFLD (106 aa)). FAD-binding positions include tyrosine 188 and 204–207 (RQYS). 268–273 (GVGQTP) serves as a coordination point for NADP(+). 389–392 (CFGP) contributes to the FAD binding site.

Belongs to the globin family. Two-domain flavohemoproteins subfamily. This sequence in the C-terminal section; belongs to the flavoprotein pyridine nucleotide cytochrome reductase family. It depends on heme b as a cofactor. The cofactor is FAD.

The enzyme catalyses 2 nitric oxide + NADPH + 2 O2 = 2 nitrate + NADP(+) + H(+). It carries out the reaction 2 nitric oxide + NADH + 2 O2 = 2 nitrate + NAD(+) + H(+). Its function is as follows. Is involved in NO detoxification in an aerobic process, termed nitric oxide dioxygenase (NOD) reaction that utilizes O(2) and NAD(P)H to convert NO to nitrate, which protects the bacterium from various noxious nitrogen compounds. Therefore, plays a central role in the inducible response to nitrosative stress. The sequence is that of Flavohemoprotein from Pectobacterium atrosepticum (strain SCRI 1043 / ATCC BAA-672) (Erwinia carotovora subsp. atroseptica).